We begin with the raw amino-acid sequence, 164 residues long: Cyclic pyranopterin monophosphate synthase (164 aa).

Substrate is bound by residues 77-79 and 115-116; these read LCH and ME. The active site involves D130.

This sequence belongs to the MoaC family. Homohexamer; trimer of dimers.

It carries out the reaction (8S)-3',8-cyclo-7,8-dihydroguanosine 5'-triphosphate = cyclic pyranopterin phosphate + diphosphate. The protein operates within cofactor biosynthesis; molybdopterin biosynthesis. In terms of biological role, catalyzes the conversion of (8S)-3',8-cyclo-7,8-dihydroguanosine 5'-triphosphate to cyclic pyranopterin monophosphate (cPMP). This is Cyclic pyranopterin monophosphate synthase from Sinorhizobium medicae (strain WSM419) (Ensifer medicae).